Here is a 185-residue protein sequence, read N- to C-terminus: Ribosome-recycling factor (185 aa).

Belongs to the RRF family.

Its subcellular location is the cytoplasm. Its function is as follows. Responsible for the release of ribosomes from messenger RNA at the termination of protein biosynthesis. May increase the efficiency of translation by recycling ribosomes from one round of translation to another. The sequence is that of Ribosome-recycling factor from Streptococcus pyogenes serotype M18 (strain MGAS8232).